Reading from the N-terminus, the 418-residue chain is UDP-N-acetylglucosamine 1-carboxyvinyltransferase (418 aa).

Phosphoenolpyruvate is bound at residue 22–23 (KN). Arg-93 serves as a coordination point for UDP-N-acetyl-alpha-D-glucosamine. The active-site Proton donor is the Cys-117. Position 117 is a 2-(S-cysteinyl)pyruvic acid O-phosphothioketal (Cys-117). Residues 122–126 (RPIDL), Asp-306, and Leu-328 contribute to the UDP-N-acetyl-alpha-D-glucosamine site.

It belongs to the EPSP synthase family. MurA subfamily.

The protein resides in the cytoplasm. It catalyses the reaction phosphoenolpyruvate + UDP-N-acetyl-alpha-D-glucosamine = UDP-N-acetyl-3-O-(1-carboxyvinyl)-alpha-D-glucosamine + phosphate. Its pathway is cell wall biogenesis; peptidoglycan biosynthesis. Functionally, cell wall formation. Adds enolpyruvyl to UDP-N-acetylglucosamine. The polypeptide is UDP-N-acetylglucosamine 1-carboxyvinyltransferase (Campylobacter hominis (strain ATCC BAA-381 / DSM 21671 / CCUG 45161 / LMG 19568 / NCTC 13146 / CH001A)).